A 369-amino-acid chain; its full sequence is Coiled-coil domain-containing protein 130 homolog (369 aa).

The segment covering 233–263 has biased composition (basic and acidic residues); the sequence is TRYRDTKTHDDHLESSRDRIESRRIFRRPEE. The disordered stretch occupies residues 233–369; sequence TRYRDTKTHD…EYGNSSDDSD (137 aa). Residues 266–282 show a composition bias toward low complexity; it reads TPSTSSGSSGGAVPSAS. Positions 283 to 297 are enriched in basic and acidic residues; it reads ERLKATMKAERDKRI. The span at 299-310 shows a compositional bias: low complexity; the sequence is ASFSTAGTSSAT.

This sequence belongs to the CWC16 family.

This chain is Coiled-coil domain-containing protein 130 homolog, found in Caenorhabditis elegans.